A 304-amino-acid chain; its full sequence is Protein transport protein sec13 (304 aa).

WD repeat units lie at residues 12 to 51 (GHDDMIHDAVLDYYGRRLATCSSDRTIKIFEIEGESQRLV), 56 to 97 (GHDG…WQRI), 102 to 143 (LHKA…WEHN), 147 to 203 (AHGL…NGYK), 211 to 253 (GHTD…PGEW), and 259 to 298 (NFDAAVWRVSWSLSGNVLAASSDNNKVTLWKENLKGEWEN).

Belongs to the WD repeat SEC13 family. The COPII coat is composed of at least 5 proteins: the sec23/24 complex, the sec13/31 complex, and the protein vtr-7/sar1. Component of the nuclear pore complex (NPC). NPC constitutes the exclusive means of nucleocytoplasmic transport. NPCs allow the passive diffusion of ions and small molecules and the active, nuclear transport receptor-mediated bidirectional transport of macromolecules such as proteins, RNAs, ribonucleoparticles (RNPs), and ribosomal subunits across the nuclear envelope. Due to its 8-fold rotational symmetry, all subunits are present with 8 copies or multiples thereof.

The protein localises to the cytoplasmic vesicle. It localises to the COPII-coated vesicle membrane. It is found in the endoplasmic reticulum membrane. Its subcellular location is the nucleus. The protein resides in the nuclear pore complex. In terms of biological role, component of the coat protein complex II (COPII) which promotes the formation of transport vesicles from the endoplasmic reticulum (ER). The coat has two main functions, the physical deformation of the endoplasmic reticulum membrane into vesicles and the selection of cargo molecules. It also functions as a component of the nuclear pore complex (NPC). NPC components, collectively referred to as nucleoporins (NUPs), can play the role of both NPC structural components and of docking or interaction partners for transiently associated nuclear transport factors. Nup-20/sec13 is required for efficient mRNA export from the nucleus to the cytoplasm and for correct nuclear pore biogenesis and distribution. The protein is Protein transport protein sec13 (nup-20) of Neurospora crassa (strain ATCC 24698 / 74-OR23-1A / CBS 708.71 / DSM 1257 / FGSC 987).